The primary structure comprises 288 residues: Probable aquaporin PIP2-2 (288 aa).

The tract at residues 1 to 21 is disordered; the sequence is MAKDIEASAPEGGEFSAKDYT. The next 2 helical transmembrane spans lie at 42–62 and 81–101; these read AVIA…ATVI and GVGI…LVYC. The NPA 1 signature appears at 111–113; sequence NPA. 3 consecutive transmembrane segments (helical) span residues 130 to 150, 172 to 192, and 204 to 224; these read VLYI…VKGF, GTGL…VFSA, and IPVL…LATI. Positions 232–234 match the NPA 2 motif; it reads NPA. Residues 254-274 form a helical membrane-spanning segment; that stretch reads IFWVGPLIGAAIAAAYHQYVL.

It belongs to the MIP/aquaporin (TC 1.A.8) family. PIP (TC 1.A.8.11) subfamily. In terms of tissue distribution, expressed in roots, leaves and anthers.

The protein localises to the cell membrane. Aquaporins facilitate the transport of water and small neutral solutes across cell membranes. The sequence is that of Probable aquaporin PIP2-2 (PIP2-2) from Oryza sativa subsp. japonica (Rice).